Consider the following 210-residue polypeptide: tRNA (guanine-N(7)-)-methyltransferase (210 aa).

Positions 36, 61, 90, and 112 each coordinate S-adenosyl-L-methionine. Residue Asp-112 is part of the active site. Residues Lys-116, Asp-148, and 188–191 (TEYE) each bind substrate.

Belongs to the class I-like SAM-binding methyltransferase superfamily. TrmB family.

It catalyses the reaction guanosine(46) in tRNA + S-adenosyl-L-methionine = N(7)-methylguanosine(46) in tRNA + S-adenosyl-L-homocysteine. It functions in the pathway tRNA modification; N(7)-methylguanine-tRNA biosynthesis. In terms of biological role, catalyzes the formation of N(7)-methylguanine at position 46 (m7G46) in tRNA. The sequence is that of tRNA (guanine-N(7)-)-methyltransferase from Mycoplasma genitalium (strain ATCC 33530 / DSM 19775 / NCTC 10195 / G37) (Mycoplasmoides genitalium).